The chain runs to 103 residues: Cell division suppressor protein YneA (103 aa).

In terms of domain architecture, LysM spans 36-87 (VKIEVQEGDTLWELADRIKGGKTADKHKFIEWVADKNNLPTSVIKPGDVLIL).

This sequence belongs to the YneA family.

It localises to the cytoplasm. In terms of biological role, inhibits cell division during the SOS response. Affects a later stage of the cell division protein assembly, after the assembly of the Z ring, by probably suppressing recruitment of FtsL and/or DivIC to the division machinery. This Bacillus licheniformis (strain ATCC 14580 / DSM 13 / JCM 2505 / CCUG 7422 / NBRC 12200 / NCIMB 9375 / NCTC 10341 / NRRL NRS-1264 / Gibson 46) protein is Cell division suppressor protein YneA.